A 592-amino-acid polypeptide reads, in one-letter code: Transcription factor MYC3 (592 aa).

Positions 82–141 are JAZ-interaction domain; that stretch reads STGDNTVILGWGDGYYKGEEDKEKKKNNTNTAEQEHRKRVIRELNSLISGGIGVSDESND. Disordered stretches follow at residues 261-313, 341-361, 393-422, and 465-508; these read ENDP…VENQ, CGNE…NDEG, EPPE…AERQ, and QQAE…STAS. Positions 278-293 are enriched in low complexity; the sequence is SPARVNNGNNSNSNSK. The segment covering 294 to 306 has biased composition (basic and acidic residues); the sequence is SDSHQISKLEKND. The span at 352–361 shows a compositional bias: polar residues; it reads VSKGSNNDEG. The span at 398–407 shows a compositional bias: basic residues; it reads KPRKRGRKPA. Composition is skewed to basic and acidic residues over residues 408–422 and 468–482; these read NGRE…AERQ and ESDK…DGMS. The region spanning 411 to 460 is the bHLH domain; it reads EEPLNHVEAERQRREKLNQRFYSLRAVVPNVSKMDKASLLGDAISYINEL.

As to quaternary structure, homo- and heterodimer. Interacts with MYB28, MYB29, MYB34, MYB51, MYB76, MYB122, MYC2, MYC4, AFPH2/NINJA and the JAZ repressors TIFY10A/JAZ1, TIFY10B/JAZ2, TIFY6B/JAZ3, TIFY11A/JAZ5, TIFY11B/JAZ6, TIFY5B/JAZ7, TIFY5A/JAZ8, TIFY7/JAZ9, TIFY9/JAZ10, TIFY3A/JAZ11 and TIFY3B/JAZ12. Constitutively expressed in roots, stems, leaves, flowers, and seedlings.

It localises to the nucleus. Transcription factor involved in tryptophan, jasmonic acid (JA) and other stress-responsive gene regulation. With MYC2 and MYC4, controls additively subsets of JA-dependent responses. Can form complexes with all known glucosinolate-related MYBs to regulate glucosinolate biosynthesis. Binds to the G-box (5'-CACGTG-3') of promoters. Activates multiple TIFY/JAZ promoters. The chain is Transcription factor MYC3 (MYC3) from Arabidopsis thaliana (Mouse-ear cress).